Consider the following 253-residue polypeptide: Small ribosomal subunit protein uS5 (253 aa).

The tract at residues 1–30 (MAESAPRGFGRGGRGGRGRGRGRRGAKRDE) is disordered. Positions 14–26 (RGGRGRGRGRRGA) are enriched in basic residues. Residues 75–138 (LNDEVMKVVP…IMGKLSIMPI (64 aa)) enclose the S5 DRBM domain.

This sequence belongs to the universal ribosomal protein uS5 family. In terms of assembly, component of the small ribosomal subunit (SSU). Mature yeast ribosomes consist of a small (40S) and a large (60S) subunit. The 40S small subunit contains 1 molecule of ribosomal RNA (18S rRNA) and at least 33 different proteins. The large 60S subunit contains 3 rRNA molecules (25S, 5.8S and 5S rRNA) and at least 46 different proteins. Interacts with snoRNA U3. Interacts with MPP10. Component of the ribosomal small subunit (SSU) processome composed of at least 40 protein subunits and snoRNA U3.

Its subcellular location is the cytoplasm. Component of the ribosome, a large ribonucleoprotein complex responsible for the synthesis of proteins in the cell. The small ribosomal subunit (SSU) binds messenger RNAs (mRNAs) and translates the encoded message by selecting cognate aminoacyl-transfer RNA (tRNA) molecules. The large subunit (LSU) contains the ribosomal catalytic site termed the peptidyl transferase center (PTC), which catalyzes the formation of peptide bonds, thereby polymerizing the amino acids delivered by tRNAs into a polypeptide chain. The nascent polypeptides leave the ribosome through a tunnel in the LSU and interact with protein factors that function in enzymatic processing, targeting, and the membrane insertion of nascent chains at the exit of the ribosomal tunnel. Plays a role in the assembly and function of the 40S ribosomal subunit. Mutations in this protein affects the control of translational fidelity. Involved in nucleolar processing of pre-18S ribosomal RNA and ribosome assembly. Its function is as follows. Component of the ribosome, a large ribonucleoprotein complex responsible for the synthesis of proteins in the cell. The small ribosomal subunit (SSU) binds messenger RNAs (mRNAs) and translates the encoded message by selecting cognate aminoacyl-transfer RNA (tRNA) molecules. The large subunit (LSU) contains the ribosomal catalytic site termed the peptidyl transferase center (PTC), which catalyzes the formation of peptide bonds, thereby polymerizing the amino acids delivered by tRNAs into a polypeptide chain. The nascent polypeptides leave the ribosome through a tunnel in the LSU and interact with protein factors that function in enzymatic processing, targeting, and the membrane insertion of nascent chains at the exit of the ribosomal tunnel. uS5 is important for the assembly and function of the 40S ribosomal subunit. Mutations in this protein affects the control of translational fidelity. Involved in nucleolar processing of pre-18S ribosomal RNA and ribosome assembly. The protein is Small ribosomal subunit protein uS5 (rps2) of Schizosaccharomyces pombe (strain 972 / ATCC 24843) (Fission yeast).